The chain runs to 101 residues: Small ribosomal subunit protein uS14 (101 aa).

It belongs to the universal ribosomal protein uS14 family. In terms of assembly, part of the 30S ribosomal subunit. Contacts proteins S3 and S10.

Its function is as follows. Binds 16S rRNA, required for the assembly of 30S particles and may also be responsible for determining the conformation of the 16S rRNA at the A site. This chain is Small ribosomal subunit protein uS14, found in Novosphingobium aromaticivorans (strain ATCC 700278 / DSM 12444 / CCUG 56034 / CIP 105152 / NBRC 16084 / F199).